We begin with the raw amino-acid sequence, 422 residues long: Synaptotagmin-1 (422 aa).

The Vesicular segment spans residues 1–57 (MVSESHHEALAAPPVTTVATVLPHNATEPASPGEGKEDAFSKLKEKFMNELHKIPLP). Asn-25 carries N-linked (GlcNAc...) asparagine glycosylation. A helical transmembrane segment spans residues 58 to 80 (PWALIAIAIVAVLLVLTCCFCIC). 5 S-palmitoyl cysteine lipidation sites follow: Cys-75, Cys-76, Cys-78, Cys-80, and Cys-83. Residues 81-422 (KKCLFKKKNK…EVDAMLAVKK (342 aa)) lie on the Cytoplasmic side of the membrane. A disordered region spans residues 113 to 142 (TMKDQALKDDDAETGLTDGEEKEEPKEEEK). The span at 122–134 (DDAETGLTDGEEK) shows a compositional bias: acidic residues. Thr-129 is modified (phosphothreonine). The segment at 136–382 (EPKEEEKLGK…AIGKVFVGYN (247 aa)) is phospholipid binding. Positions 142 to 261 (KLGKLQYSLD…DFGHVTEEWR (120 aa)) constitute a C2 1 domain. Ca(2+) is bound by residues Leu-172, Asp-173, and Asp-179. Tyr-230 is subject to Phosphotyrosine. Asp-231, Phe-232, Asp-233, Ser-236, Lys-237, and Asp-239 together coordinate Ca(2+). Phosphoserine is present on Ser-265. One can recognise a C2 2 domain in the interval 273–406 (KLGDICFSLR…NPRRPIAQWH (134 aa)). 2 residues coordinate Ca(2+): Asp-304 and Asp-310. Ser-343 and Ser-345 each carry phosphoserine. Ca(2+)-binding residues include Asp-364, Asp-366, and Asp-372.

Belongs to the synaptotagmin family. Homotetramer. Heterodimer; heterodimerizes with SYT2 in presence of calcium. Interacts with SCAMP5. Interacts with STON2. Forms a complex with SV2B, syntaxin 1 and SNAP25. Interacts with SV2A, SV2B and SV2C. Interacts with RIMS1. Interacts with PRRT2. Interacts with DNAJC5 in a phosphorylation-dependent manner. Interacts (via N-terminus) with RAB3A. Interacts with SYT12. Interacts with calmodulin. Interacts with DNM1 (via C-terminal proline-rich domain (PRD)); this interaction facilitates vesicle fission during clathrin-mediated endocytosis (CME). Ca(2+) serves as cofactor. In terms of processing, glycosylated.

The protein resides in the cytoplasmic vesicle. Its subcellular location is the secretory vesicle membrane. It is found in the secretory vesicle. It localises to the synaptic vesicle membrane. The protein localises to the chromaffin granule membrane. The protein resides in the cytoplasm. Functionally, calcium sensor that participates in triggering neurotransmitter release at the synapse. May have a regulatory role in the membrane interactions during trafficking of synaptic vesicles at the active zone of the synapse. It binds acidic phospholipids with a specificity that requires the presence of both an acidic head group and a diacyl backbone. A Ca(2+)-dependent interaction between synaptotagmin and putative receptors for activated protein kinase C has also been reported. It can bind to at least three additional proteins in a Ca(2+)-independent manner; these are neurexins, syntaxin and AP2. Plays a role in dendrite formation by melanocytes. This is Synaptotagmin-1 from Bos taurus (Bovine).